A 188-amino-acid chain; its full sequence is Nicotinamide-nucleotide adenylyltransferase (188 aa).

The segment at 166–188 is disordered; the sequence is SDSLERYAATGESLPESLDDLDD.

Belongs to the archaeal NMN adenylyltransferase family.

Its subcellular location is the cytoplasm. The enzyme catalyses beta-nicotinamide D-ribonucleotide + ATP + H(+) = diphosphate + NAD(+). It participates in cofactor biosynthesis; NAD(+) biosynthesis; NAD(+) from nicotinamide D-ribonucleotide: step 1/1. In Haloarcula marismortui (strain ATCC 43049 / DSM 3752 / JCM 8966 / VKM B-1809) (Halobacterium marismortui), this protein is Nicotinamide-nucleotide adenylyltransferase.